Here is a 312-residue protein sequence, read N- to C-terminus: Glycine--tRNA ligase alpha subunit (312 aa).

It belongs to the class-II aminoacyl-tRNA synthetase family. Tetramer of two alpha and two beta subunits.

The protein resides in the cytoplasm. The catalysed reaction is tRNA(Gly) + glycine + ATP = glycyl-tRNA(Gly) + AMP + diphosphate. The chain is Glycine--tRNA ligase alpha subunit from Thiobacillus denitrificans (strain ATCC 25259 / T1).